Here is a 124-residue protein sequence, read N- to C-terminus: uncharacterized protein (124 aa).

3 helical membrane-spanning segments follow: residues 14–34 (KAIV…YGWQ), 41–61 (FSYG…IIFY), and 85–105 (MVFI…AFFV).

It localises to the cell membrane. This is an uncharacterized protein from Haemophilus influenzae (strain ATCC 51907 / DSM 11121 / KW20 / Rd).